The following is a 230-amino-acid chain: Large ribosomal subunit protein uL1c (230 aa).

This sequence belongs to the universal ribosomal protein uL1 family. In terms of assembly, part of the 50S ribosomal subunit.

The protein localises to the plastid. It localises to the chloroplast. Its function is as follows. Binds directly to 23S rRNA. Might be involved in E site tRNA release (Potential). In Thalassiosira pseudonana (Marine diatom), this protein is Large ribosomal subunit protein uL1c (rpl1).